Consider the following 224-residue polypeptide: Small ribosomal subunit protein uS3 (224 aa).

Residues 38 to 106 form the KH type-2 domain; it reads LREYVKEKLG…EVYLNVVEVR (69 aa).

The protein belongs to the universal ribosomal protein uS3 family. In terms of assembly, part of the 30S ribosomal subunit. Forms a tight complex with proteins S10 and S14.

Its function is as follows. Binds the lower part of the 30S subunit head. Binds mRNA in the 70S ribosome, positioning it for translation. The protein is Small ribosomal subunit protein uS3 of Anaeromyxobacter sp. (strain Fw109-5).